A 402-amino-acid chain; its full sequence is Imidazolonepropionase (402 aa).

Fe(3+) is bound by residues histidine 66 and histidine 68. Residues histidine 66 and histidine 68 each coordinate Zn(2+). 4-imidazolone-5-propanoate-binding residues include arginine 75, tyrosine 138, and histidine 171. Tyrosine 138 provides a ligand contact to N-formimidoyl-L-glutamate. Histidine 236 provides a ligand contact to Fe(3+). Histidine 236 lines the Zn(2+) pocket. Glutamine 239 provides a ligand contact to 4-imidazolone-5-propanoate. Aspartate 311 lines the Fe(3+) pocket. Zn(2+) is bound at residue aspartate 311. Residues asparagine 313 and glycine 315 each coordinate N-formimidoyl-L-glutamate. Threonine 316 contributes to the 4-imidazolone-5-propanoate binding site.

It belongs to the metallo-dependent hydrolases superfamily. HutI family. The cofactor is Zn(2+). Fe(3+) is required as a cofactor.

It localises to the cytoplasm. It carries out the reaction 4-imidazolone-5-propanoate + H2O = N-formimidoyl-L-glutamate. It participates in amino-acid degradation; L-histidine degradation into L-glutamate; N-formimidoyl-L-glutamate from L-histidine: step 3/3. Its function is as follows. Catalyzes the hydrolytic cleavage of the carbon-nitrogen bond in imidazolone-5-propanoate to yield N-formimidoyl-L-glutamate. It is the third step in the universal histidine degradation pathway. The polypeptide is Imidazolonepropionase (Vibrio cholerae serotype O1 (strain ATCC 39541 / Classical Ogawa 395 / O395)).